We begin with the raw amino-acid sequence, 510 residues long: NAD(P)H-quinone oxidoreductase subunit 2 B, chloroplastic (510 aa).

Helical transmembrane passes span 24–44 (LLLF…GLIL), 57–77 (IPWL…ALLF), 99–119 (IFQF…VEYI), 124–144 (MAIT…MFLC), 149–169 (LITI…LSGY), 183–203 (YLLM…WLYG), 227–247 (PGIS…LSLA), 295–315 (WHLL…LIAI), 323–343 (MLAY…IVGD), 354–374 (YMLF…LFGL), 395–415 (ALSL…AGFF), 418–438 (LHLF…IGLL), and 482–502 (LSMI…NPIV).

Belongs to the complex I subunit 2 family. In terms of assembly, NDH is composed of at least 16 different subunits, 5 of which are encoded in the nucleus.

The protein resides in the plastid. The protein localises to the chloroplast thylakoid membrane. It carries out the reaction a plastoquinone + NADH + (n+1) H(+)(in) = a plastoquinol + NAD(+) + n H(+)(out). The enzyme catalyses a plastoquinone + NADPH + (n+1) H(+)(in) = a plastoquinol + NADP(+) + n H(+)(out). NDH shuttles electrons from NAD(P)H:plastoquinone, via FMN and iron-sulfur (Fe-S) centers, to quinones in the photosynthetic chain and possibly in a chloroplast respiratory chain. The immediate electron acceptor for the enzyme in this species is believed to be plastoquinone. Couples the redox reaction to proton translocation, and thus conserves the redox energy in a proton gradient. This Manihot esculenta (Cassava) protein is NAD(P)H-quinone oxidoreductase subunit 2 B, chloroplastic.